A 476-amino-acid chain; its full sequence is Ribulose bisphosphate carboxylase large chain (476 aa).

Residues 1–2 (MS) constitute a propeptide that is removed on maturation. Position 3 is an N-acetylproline (P3). K14 is modified (N6,N6,N6-trimethyllysine). 2 residues coordinate substrate: N123 and T173. The Proton acceptor role is filled by K175. K177 is a binding site for substrate. Mg(2+) contacts are provided by K201, D203, and E204. K201 is subject to N6-carboxylysine. Residue H294 is the Proton acceptor of the active site. Substrate-binding residues include R295, H327, and S379.

The protein belongs to the RuBisCO large chain family. Type I subfamily. As to quaternary structure, heterohexadecamer of 8 large chains and 8 small chains; disulfide-linked. The disulfide link is formed within the large subunit homodimers. Mg(2+) serves as cofactor. The disulfide bond which can form in the large chain dimeric partners within the hexadecamer appears to be associated with oxidative stress and protein turnover.

The protein localises to the plastid. It localises to the chloroplast. The enzyme catalyses 2 (2R)-3-phosphoglycerate + 2 H(+) = D-ribulose 1,5-bisphosphate + CO2 + H2O. The catalysed reaction is D-ribulose 1,5-bisphosphate + O2 = 2-phosphoglycolate + (2R)-3-phosphoglycerate + 2 H(+). Functionally, ruBisCO catalyzes two reactions: the carboxylation of D-ribulose 1,5-bisphosphate, the primary event in carbon dioxide fixation, as well as the oxidative fragmentation of the pentose substrate in the photorespiration process. Both reactions occur simultaneously and in competition at the same active site. The chain is Ribulose bisphosphate carboxylase large chain from Setaria italica (Foxtail millet).